Here is a 907-residue protein sequence, read N- to C-terminus: Protein translocase subunit SecA (907 aa).

ATP is bound by residues Q87, 105–109 (GEGKT), and D512. The interval 834 to 907 (QEDVERMEEQ…KKYKQCHGKI (74 aa)) is disordered. 2 stretches are compositionally biased toward basic and acidic residues: residues 836–853 (DVERMEEQRRLQAEEAAR) and 873–888 (EEAHSPMVREERKVGR). Residues C892, C894, C903, and H904 each contribute to the Zn(2+) site. The span at 898-907 (KKYKQCHGKI) shows a compositional bias: basic residues.

The protein belongs to the SecA family. Monomer and homodimer. Part of the essential Sec protein translocation apparatus which comprises SecA, SecYEG and auxiliary proteins SecDF-YajC and YidC. The cofactor is Zn(2+).

It is found in the cell inner membrane. It localises to the cytoplasm. It carries out the reaction ATP + H2O + cellular proteinSide 1 = ADP + phosphate + cellular proteinSide 2.. Part of the Sec protein translocase complex. Interacts with the SecYEG preprotein conducting channel. Has a central role in coupling the hydrolysis of ATP to the transfer of proteins into and across the cell membrane, serving both as a receptor for the preprotein-SecB complex and as an ATP-driven molecular motor driving the stepwise translocation of polypeptide chains across the membrane. In Aliivibrio fischeri (strain ATCC 700601 / ES114) (Vibrio fischeri), this protein is Protein translocase subunit SecA.